Here is a 185-residue protein sequence, read N- to C-terminus: Peptidyl-tRNA hydrolase (185 aa).

TRNA is bound at residue tyrosine 14. Histidine 19 functions as the Proton acceptor in the catalytic mechanism. Positions 65, 67, and 113 each coordinate tRNA.

This sequence belongs to the PTH family. In terms of assembly, monomer.

The protein localises to the cytoplasm. It carries out the reaction an N-acyl-L-alpha-aminoacyl-tRNA + H2O = an N-acyl-L-amino acid + a tRNA + H(+). Hydrolyzes ribosome-free peptidyl-tRNAs (with 1 or more amino acids incorporated), which drop off the ribosome during protein synthesis, or as a result of ribosome stalling. Its function is as follows. Catalyzes the release of premature peptidyl moieties from peptidyl-tRNA molecules trapped in stalled 50S ribosomal subunits, and thus maintains levels of free tRNAs and 50S ribosomes. The protein is Peptidyl-tRNA hydrolase of Rickettsia felis (strain ATCC VR-1525 / URRWXCal2) (Rickettsia azadi).